The following is a 379-amino-acid chain: Cytochrome b (379 aa).

A run of 4 helical transmembrane segments spans residues 33-53 (FGSLLGMCLMIQILTGLFLAM), 77-98 (WLIRYLHANGASMFFICLFIHV), 113-133 (WNIGIILFLTTMATAFVGYVL), and 178-198 (FFAFHFILPFIITAFVLVHLL). Residues His-83 and His-97 each coordinate heme b. The heme b site is built by His-182 and His-196. His-201 provides a ligand contact to a ubiquinone. The next 4 membrane-spanning stretches (helical) occupy residues 226 to 246 (IKDLLGILFLLTALMILALFF), 288 to 308 (LGGVLALLLSILILMAFPLLN), 320 to 340 (ITQTIYWILIANLLVLTWIGG), and 347 to 367 (FTMIGQIASITYFAIILILXP).

It belongs to the cytochrome b family. In terms of assembly, the cytochrome bc1 complex contains 11 subunits: 3 respiratory subunits (MT-CYB, CYC1 and UQCRFS1), 2 core proteins (UQCRC1 and UQCRC2) and 6 low-molecular weight proteins (UQCRH/QCR6, UQCRB/QCR7, UQCRQ/QCR8, UQCR10/QCR9, UQCR11/QCR10 and a cleavage product of UQCRFS1). This cytochrome bc1 complex then forms a dimer. It depends on heme b as a cofactor.

The protein localises to the mitochondrion inner membrane. In terms of biological role, component of the ubiquinol-cytochrome c reductase complex (complex III or cytochrome b-c1 complex) that is part of the mitochondrial respiratory chain. The b-c1 complex mediates electron transfer from ubiquinol to cytochrome c. Contributes to the generation of a proton gradient across the mitochondrial membrane that is then used for ATP synthesis. The sequence is that of Cytochrome b (MT-CYB) from Akodon toba (Chaco grass mouse).